The sequence spans 776 residues: Lysyl oxidase homolog 2 (776 aa).

An N-terminal signal peptide occupies residues 1 to 25; the sequence is MEIPFGSCLYSCLALLVLLPSLSLA. SRCR domains follow at residues 61–162, 191–305, 329–428, and 438–546; these read VRLA…VVCS, IRPI…VSCV, VRLR…VRCN, and VRLN…VACS. Cystine bridges form between Cys87–Cys151, Cys100–Cys161, Cys131–Cys141, Cys221–Cys294, Cys234–Cys304, Cys268–Cys278, Cys354–Cys417, Cys367–Cys427, and Cys398–Cys408. An N-linked (GlcNAc...) asparagine glycan is attached at Asn267. A glycan (N-linked (GlcNAc...) asparagine) is linked at Asn291. An N-linked (GlcNAc...) asparagine glycan is attached at Asn458. 3 cysteine pairs are disulfide-bonded: Cys467-Cys532, Cys480-Cys545, and Cys514-Cys524. The lysyl-oxidase like stretch occupies residues 550-753; sequence PDLVLNAEIV…WMYNCHVGGA (204 aa). Asp551 and Leu552 together coordinate Ca(2+). 4 disulfide bridges follow: Cys575–Cys627, Cys581–Cys697, Cys659–Cys675, and Cys665–Cys687. Residues His628, His630, and His632 each coordinate Cu cation. Asn646 carries N-linked (GlcNAc...) asparagine glycosylation. The segment at residues 655-691 is a cross-link (lysine tyrosylquinone (Lys-Tyr)); sequence KASFCLEDTECEGDIQKSYECANFGEQGITMGCWDMY. Tyr691 is modified (2',4',5'-topaquinone). Ca(2+) contacts are provided by Glu724, Asp726, Asn729, and Asn730. The cysteines at positions 734 and 748 are disulfide-linked.

The protein belongs to the lysyl oxidase family. As to quaternary structure, component of some chromatin repressor complex. Interacts with SNAI1. Interacts with TAF10. Interacts with HSPA5. Interacts with EFEMP2. Cu cation is required as a cofactor. Lysine tyrosylquinone residue serves as cofactor. Post-translationally, the lysine tyrosylquinone cross-link (LTQ) is generated by condensation of the epsilon-amino group of a lysine with a topaquinone produced by oxidation of tyrosine. N-glycosylated. N-glycosylation on Asn-458 and Asn-646 may be essential for proper folding and secretion; may be composed of a fucosylated carbohydrates attached to a trimannose N-linked glycan core.

Its subcellular location is the secreted. It localises to the extracellular space. The protein resides in the extracellular matrix. It is found in the basement membrane. The protein localises to the nucleus. Its subcellular location is the chromosome. It localises to the endoplasmic reticulum. It catalyses the reaction L-lysyl-[protein] + O2 + H2O = (S)-2-amino-6-oxohexanoyl-[protein] + H2O2 + NH4(+). With respect to regulation, specifically inhibited by a mouse monoclonal antibody AB0023, inhibition occurs in a non-competitive manner. Its function is as follows. Mediates the post-translational oxidative deamination of lysine residues on target proteins leading to the formation of deaminated lysine (allysine). Acts as a transcription corepressor and specifically mediates deamination of trimethylated 'Lys-4' of histone H3 (H3K4me3), a specific tag for epigenetic transcriptional activation. Shows no activity against histone H3 when it is trimethylated on 'Lys-9' (H3K9me3) or 'Lys-27' (H3K27me3) or when 'Lys-4' is monomethylated (H3K4me1) or dimethylated (H3K4me2). Also mediates deamination of methylated TAF10, a member of the transcription factor IID (TFIID) complex, which induces release of TAF10 from promoters, leading to inhibition of TFIID-dependent transcription. LOXL2-mediated deamination of TAF10 results in transcriptional repression of genes required for embryonic stem cell pluripotency including POU5F1/OCT4, NANOG, KLF4 and SOX2. Involved in epithelial to mesenchymal transition (EMT) via interaction with SNAI1 and participates in repression of E-cadherin CDH1, probably by mediating deamination of histone H3. During EMT, involved with SNAI1 in negatively regulating pericentromeric heterochromatin transcription. SNAI1 recruits LOXL2 to pericentromeric regions to oxidize histone H3 and repress transcription which leads to release of heterochromatin component CBX5/HP1A, enabling chromatin reorganization and acquisition of mesenchymal traits. Interacts with the endoplasmic reticulum protein HSPA5 which activates the IRE1-XBP1 pathway of the unfolded protein response, leading to expression of several transcription factors involved in EMT and subsequent EMT induction. When secreted into the extracellular matrix, promotes cross-linking of extracellular matrix proteins by mediating oxidative deamination of peptidyl lysine residues in precursors to fibrous collagen and elastin. Acts as a regulator of sprouting angiogenesis, probably via collagen IV scaffolding. Acts as a regulator of chondrocyte differentiation, probably by regulating expression of factors that control chondrocyte differentiation. This chain is Lysyl oxidase homolog 2 (Loxl2), found in Rattus norvegicus (Rat).